The chain runs to 235 residues: Protein GrpE (235 aa).

Positions 1-18 are enriched in polar residues; the sequence is MTDGNQKPDGNSGEQVTV. Disordered regions lie at residues 1 to 50 and 198 to 235; these read MTDG…DAAH and ESVD…PSGS. Over residues 19-35 the composition is skewed to basic and acidic residues; that stretch reads TDKRRIDPETGEVRHVP. Polar residues predominate over residues 215-235; it reads ADQGNSADTSGEQAESEPSGS.

It belongs to the GrpE family. Homodimer.

It localises to the cytoplasm. Its function is as follows. Participates actively in the response to hyperosmotic and heat shock by preventing the aggregation of stress-denatured proteins, in association with DnaK and GrpE. It is the nucleotide exchange factor for DnaK and may function as a thermosensor. Unfolded proteins bind initially to DnaJ; upon interaction with the DnaJ-bound protein, DnaK hydrolyzes its bound ATP, resulting in the formation of a stable complex. GrpE releases ADP from DnaK; ATP binding to DnaK triggers the release of the substrate protein, thus completing the reaction cycle. Several rounds of ATP-dependent interactions between DnaJ, DnaK and GrpE are required for fully efficient folding. The sequence is that of Protein GrpE from Mycobacterium tuberculosis (strain ATCC 25177 / H37Ra).